The primary structure comprises 234 residues: ASKTCPSNTPLSCHNTTVVQDTCCFIPSGQLLQTQFWDTDPSTGPSDSWTIHGLWPDNCDGSFPQTCDASRAYTNITDILTAMGADDTLQYMQTYWKDYQGNDESFWEHEWGKHGTCITTLDPGCYDDYVPTEEAADFFSKTVSLFKTLPTYQWLADAGITPDGSKSYALDDIQSALSQQHGAEVTLGCDGKTLNEVWYHFNVKGSLQDGQFVAAEPDGAKSTCPDDVYYDPKK.

5 disulfide bridges follow: C5-C24, C13-C59, C23-C125, C67-C117, and C189-C224. A glycan (N-linked (GlcNAc...) asparagine) is linked at N15. The active site involves H52. N75 is a glycosylation site (N-linked (GlcNAc...) asparagine). Active-site residues include E110 and H114.

The protein belongs to the RNase T2 family.

It catalyses the reaction a ribonucleotidyl-ribonucleotide-RNA + H2O = a 3'-end 3'-phospho-ribonucleotide-RNA + a 5'-end dephospho-ribonucleoside-RNA + H(+). This is a base non-specific and adenylic acid preferential ribonuclease. This chain is Ribonuclease Trv, found in Hypocrea rufa (Trichoderma viride).